Reading from the N-terminus, the 6631-residue chain is Replicase polyprotein 1ab (6631 aa).

Over 1–1752 (MASSLKQGVS…VSSYKIVLCK (1752 aa)) the chain is Cytoplasmic. 2 Ubiquitin-like domains span residues 675–780 (KTVT…RDYE) and 1177–1229 (CKQK…ILFI). One can recognise a Macro domain in the interval 1005–1181 (VKPATCEKPK…YFDATCKQKT (177 aa)). In terms of domain architecture, Peptidase C16 spans 1238 to 1499 (EYYGLDAQKY…AKVVKEDVSN (262 aa)). The active-site For PL-PRO activity is the C1276. The C4-type; degenerate zinc finger occupies 1355-1392 (CNCGVKSYELRGLEACIQPVRAPNLLHFKTQYSNCPTC). Active-site for PL-PRO activity residues include H1439 and D1450. The chain crosses the membrane as a helical span at residues 1753 to 1773 (VVFATLLIVWFIYTSNPVVFT). Residues 1753-1866 (VVFATLLIVW…KPVAGFVIIC (114 aa)) are HD1. Positions 1771–1835 (VFTGIRVLDF…AYSVEQIYKD (65 aa)) constitute a 3Ecto domain. At 1774 to 1845 (GIRVLDFLFE…AASGINFNWN (72 aa)) the chain is on the lumenal side. Intrachain disulfides connect C1787–C1813 and C1804–C1810. The chain crosses the membrane as a helical span at residues 1846–1866 (WLYLVFLILFVKPVAGFVIIC). Residues 1867–2282 (YCVKYLVLSS…TFKWFMSCFK (416 aa)) lie on the Cytoplasmic side of the membrane. The Y1 stretch occupies residues 1913–2003 (YVQVHHILYC…KLKRHVKPTA (91 aa)). In terms of domain architecture, CoV Nsp3 Y spans 1913-2265 (YVQVHHILYC…HTQKLLVEKK (353 aa)). Residues H1917, C1922, C1927, C1930, C1963, H1966, C1970, and C1973 each contribute to the Zn(2+) site. The segment at 1917-1930 (HHILYCKDVTCEVC) is ZF1. The ZF2 stretch occupies residues 1963–1973 (CKRHNWYCRNC). Residues 2004-2106 (YAYHVVYEAC…ILDQALYEQL (103 aa)) are Y2. The coV-Y stretch occupies residues 2004 to 2265 (YAYHVVYEAC…HTQKLLVEKK (262 aa)). The segment at 2107-2165 (IVEPVSKSVIDKVCSILSNIISVDTAALNYKAGTLRDALLSITKDEEAVDMAIFCHNHE) is Y3. The tract at residues 2166–2265 (VEYTGDGFTN…HTQKLLVEKK (100 aa)) is Y4. Residues 2283–2303 (WLFVFYILFTACCLGYYYMEM) traverse the membrane as a helical segment. The segment at 2283–2666 (WLFVFYILFT…LACCYLGFIL (384 aa)) is HD2. Over 2304–2561 (NKSFVHPMYD…FFTGVNPNIY (258 aa)) the chain is Lumenal. A helical membrane pass occupies residues 2562–2582 (IQLATMFLILVVIVLIFAMVI). At 2583–2613 (KFQGVFKAYATIVFTIMLVWVINAFVLCVHS) the chain is on the cytoplasmic side. A helical membrane pass occupies residues 2614 to 2634 (YNSVLAVILLVLYCYASMVTS). The Lumenal segment spans residues 2635–2645 (RNTAIIMHCWL). A helical transmembrane segment spans residues 2646 to 2666 (VFTFGLIVPTWLACCYLGFIL). Over 2667-3098 (YMYTPLVFWC…SSFVRKATSW (432 aa)) the chain is Cytoplasmic. The Nsp4C domain occupies 2686 to 2781 (LYDGNEFVGN…RYSIGVSRLQ (96 aa)). The Peptidase C30 domain maps to 2782–3088 (AGFKKLVSPS…FNQVGGVRLQ (307 aa)). Catalysis depends on for 3CL-PRO activity residues H2822 and C2924. Residues 3099-3119 (FWSRCVLACFLFVLCAIVLFT) traverse the membrane as a helical segment. An HD3 region spans residues 3099-3319 (FWSRCVLACF…WLCTCYFGLY (221 aa)). Residues 3120 to 3123 (AVPL) lie on the Lumenal side of the membrane. Residues 3124–3144 (KFYVHAAVILLMAVLFISFTV) form a helical membrane-spanning segment. Residues 3145–3153 (KHVMAYMDT) are Cytoplasmic-facing. A helical membrane pass occupies residues 3154–3174 (FLLPTLITVIIGVCAEVPFIY). Topologically, residues 3175–3190 (NTLISQVVIFLSQWYD) are lumenal. Residues 3191 to 3211 (PVVFDTMVPWMLLPLVLYTAF) traverse the membrane as a helical segment. Residues 3212 to 3259 (KCVQGCYMNSFNTSLLMLYQFMKLGFVIYTSSNTLTAYTEGNWELFFE) are Cytoplasmic-facing. A helical membrane pass occupies residues 3260 to 3280 (LVHTIVLANVSSNSLIGLIVF). Topologically, residues 3281–3298 (KCAKWMLYYCNATYFNNY) are lumenal. A helical membrane pass occupies residues 3299 to 3319 (VLMAVMVNGIGWLCTCYFGLY). Residues 3320 to 6631 (WWVNKVFGLT…FTSDSFVCTM (3312 aa)) are Cytoplasmic-facing. Residues 3382 to 3464 (SKLSDVKCTT…DILKRSTVLQ (83 aa)) enclose the RdRp Nsp7 cofactor domain. The 210-residue stretch at 3465 to 3674 (SVTQEFSHIP…GHNKVDVALQ (210 aa)) folds into the RdRp Nsp8 cofactor domain. A Nsp9 ssRNA-binding domain is found at 3675–3785 (NNELMPHGVK…GAISNVVVLQ (111 aa)). The 142-residue stretch at 3787-3928 (KGHETEEVDA…CDSLRQPKPS (142 aa)) folds into the ExoN/MTase coactivator domain. Zn(2+) contacts are provided by C3860, C3863, H3869, C3880, C3906, C3909, C3917, and C3919. 2 zinc fingers span residues 3860 to 3880 (CLYCRAHIAHPGGAGNLDGRC) and 3906 to 3919 (CTVCQCWIGYGCQC). Residues 3942–4200 (YLNRVRGSSE…APERYFEYDV (259 aa)) form the NiRAN domain. Positions 4205–4303 (KSYDLLKYDY…MNQDNTMSFS (99 aa)) constitute a Nsp12 Interface domain. Zn(2+)-binding residues include H4234, C4240, C4245, C4249, and C4426. Positions 4304–4870 (KMGLSQLMQF…NMYRAPTTLQ (567 aa)) constitute a Nsp12 RNA-dependent RNA polymerase domain. Residues 4306 to 4519 (GLSQLMQFVG…HQKILKSIVN (214 aa)) are rdRp Fingers N-ter. Residues 4520-4558 (TRNAPVVIGTTKFYGGWDNMLRNLIQGVEDPILMGWDYP) form a rdRp Palm N-ter region. The 163-residue stretch at 4550 to 4712 (PILMGWDYPK…CYNNTLAKQG (163 aa)) folds into the RdRp catalytic domain. The rdRp Fingers C-ter stretch occupies residues 4559 to 4617 (KCDRAMPNLLRIAASLVLARKHTNCCTWSERVYRLYNECAQVLSETVLATGGIYVKPGG). Zn(2+)-binding residues include H4580, C4583, and C4584. Residues 4618–4753 (TSSGDATTAY…EKGPHEFCSQ (136 aa)) are rdRp Palm C-ter. Residues S4697, D4698, and D4699 contribute to the active site. The rdRp Thumb stretch occupies residues 4754-4870 (HTMLVEVDGE…NMYRAPTTLQ (117 aa)). A CV ZBD domain is found at 4871–4983 (SCGVCVVCNS…DDFNQLATTN (113 aa)). Zn(2+) contacts are provided by C4875, C4878, C4886, C4889, C4896, C4899, H4903, H4909, C4920, C4925, C4942, and H4945. A (+)RNA virus helicase ATP-binding domain is found at 5127 to 5307 (MVPACFVNNI…MVCVKPDIFL (181 aa)). 5152-5159 (GPPGSGKS) serves as a coordination point for ATP. The 172-residue stretch at 5308-5479 (AKCYRCPKEI…QGTGLFKICN (172 aa)) folds into the (+)RNA virus helicase C-terminal domain. In terms of domain architecture, ExoN spans 5541 to 5755 (MFITRDEAIR…RCLAINNAFC (215 aa)). Active-site residues include D5559, E5561, and E5660. Residues C5676, C5678, C5694, H5697, H5725, C5729, and H5732 each coordinate Zn(2+). Catalysis depends on residues H5736 and D5741. Zn(2+) is bound at residue C5747. The 228-residue stretch at 5764-5991 (YPHIANEDEV…NLWKSFSALQ (228 aa)) folds into the N7-MTase domain. Residue 5799 to 5805 (DIGNPKG) participates in S-adenosyl-L-methionine binding. Positions 5879 to 5893 (CNGGSLYVNKHAFHT) are gpppA-binding. Residues C5917, C5937, C5948, and H5951 each coordinate Zn(2+). One can recognise a Nsp15 N-terminal oligomerization domain in the interval 5992-6052 (SIDNIAYNMY…SVAFELYAKR (61 aa)). Residues 6053-6168 (NIRTLPNNRI…VYKRVNGAFV (116 aa)) form the AV-Nsp11N/CoV-Nsp15M domain. Residues 6185-6326 (EPRSDVERDF…EDGIIKTCYP (142 aa)) form the NendoU domain. Catalysis depends on residues H6214, H6229, K6269, K6373, D6457, K6501, and E6534. Residues 6329–6628 (QSAWTCGYNM…NTSFTSDSFV (300 aa)) enclose the Nidovirus-type SAM-dependent 2'-O-MTase domain.

This sequence belongs to the coronaviruses polyprotein 1ab family. As to quaternary structure, interacts with host PHB and PHB2. Interacts with papain-like protease and non-structural protein 6. In terms of assembly, monomer. Homodimer. Only the homodimer shows catalytic activity. As to quaternary structure, eight copies of nsp7 and eight copies of nsp8 assemble to form a heterohexadecamer dsRNA-encircling ring structure. Eight copies of nsp7 and eight copies of nsp8 assemble to form a heterohexadecamer dsRNA-encircling ring structure. Interacts with ORF6 protein. In terms of assembly, homodimer. As to quaternary structure, homododecamer. Interacts with proofreading exoribonuclease nsp14 and 2'-O-methyltransferase nsp16; these interactions enhance nsp14 and nsp16 enzymatic activities. Interacts with host DDX1 (via C-terminus). Interacts with non-structural protein 10. In terms of assembly, homohexamer. As to quaternary structure, interacts with non-structural protein 10. Mn(2+) is required as a cofactor. The cofactor is Zn(2+). Specific enzymatic cleavages in vivo by its own proteases yield mature proteins. 3C-like proteinase nsp5 liberates nsps 6-16 from the polyprotein. Papain-like and 3C-like proteinases are autocatalytically processed. In terms of processing, N-glycosylated.

It is found in the host endoplasmic reticulum membrane. The protein resides in the host cytoplasm. It localises to the host perinuclear region. The protein localises to the host endoplasmic reticulum. Its subcellular location is the host endoplasmic reticulum-Golgi intermediate compartment. It catalyses the reaction Thiol-dependent hydrolysis of ester, thioester, amide, peptide and isopeptide bonds formed by the C-terminal Gly of ubiquitin (a 76-residue protein attached to proteins as an intracellular targeting signal).. The catalysed reaction is RNA(n) + a ribonucleoside 5'-triphosphate = RNA(n+1) + diphosphate. The enzyme catalyses ATP + H2O = ADP + phosphate + H(+). It carries out the reaction a 5'-end diphospho-ribonucleoside in mRNA + GTP + H(+) = a 5'-end (5'-triphosphoguanosine)-ribonucleoside in mRNA + diphosphate. It catalyses the reaction uridylyl-uridylyl-ribonucleotide-RNA = a 3'-end uridylyl-2',3'-cyclophospho-uridine-RNA + a 5'-end dephospho-ribonucleoside-RNA. The catalysed reaction is a 5'-end (N(7)-methyl 5'-triphosphoguanosine)-ribonucleoside in mRNA + S-adenosyl-L-methionine = a 5'-end (N(7)-methyl 5'-triphosphoguanosine)-(2'-O-methyl-ribonucleoside) in mRNA + S-adenosyl-L-homocysteine + H(+). Its function is as follows. Multifunctional protein involved in the transcription and replication of viral RNAs. Contains the proteinases responsible for the cleavages of the polyprotein. May play a role in the modulation of host cell survival signaling pathway by interacting with host PHB and PHB2. Indeed, these two proteins play a role in maintaining the functional integrity of the mitochondria and protecting cells from various stresses. In terms of biological role, responsible for the cleavages located at the N-terminus of the replicase polyprotein. In addition, PL-PRO possesses a deubiquitinating/deISGylating activity and processes both 'Lys-48'- and 'Lys-63'-linked polyubiquitin chains from cellular substrates. Functionally, plays a role in host membrane rearrangement that leads to creation of cytoplasmic double-membrane vesicles (DMV) necessary for viral replication. Alone is able to induce paired membranes. Coexpression of nsp3 and nsp4 does not result in the formation of DMVs. Its function is as follows. Responsible for the majority of cleavages as it cleaves the C-terminus of replicase polyprotein at 11 sites. Recognizes substrates containing the core sequence [ILMVF]-Q-|-[SGACN]. Inhibited by the substrate-analog Cbz-Val-Asn-Ser-Thr-Leu-Gln-CMK. Forms a hexadecamer with nsp8 (8 subunits of each) that may participate in viral replication by acting as a primase. Alternatively, may synthesize substantially longer products than oligonucleotide primers. In terms of biological role, forms a hexadecamer with nsp7 (8 subunits of each) that may participate in viral replication by acting as a primase. Alternatively, may synthesize substantially longer products than oligonucleotide primers. Functionally, forms a primer, NSP9-pU, which is utilized by the polymerase for the initiation of RNA chains. Interacts with ribosome signal recognition particle RNA (SRP). Together with NSP8, suppress protein integration into the cell membrane, thereby disrupting host immune defenses. Its function is as follows. Plays a pivotal role in viral transcription by stimulating both nsp14 3'-5' exoribonuclease and nsp16 2'-O-methyltransferase activities. Therefore plays an essential role in viral mRNAs cap methylation. RNA-directed RNA polymerase that catalyzes the transcription of viral genomic and subgenomic RNAs. Acts in complex with nsp7 and nsp8 to transcribe both the minus and positive strands of genomic RNA. The kinase-like NiRAN domain of NSP12 attaches one or more nucleotides to the amino terminus of NSP9, forming a covalent RNA-protein intermediate that serves as transcription/replication primer. Subgenomic RNAs (sgRNAs) are formed by discontinuous transcription: The polymerase has the ability to pause at transcription-regulating sequences (TRS) and jump to the leader TRS, resulting in a major deletion. This creates a series of subgenomic RNAs that are replicated, transcribed and translated. In addition, Nsp12 is a subunit of the viral RNA capping enzyme that catalyzes the RNA guanylyltransferase reaction for genomic and sub-genomic RNAs. Subsequently, the NiRAN domain transfers RNA to GDP, and forms the core cap structure GpppA-RNA. In terms of biological role, multi-functional protein with a zinc-binding domain in N-terminus displaying RNA and DNA duplex-unwinding activities with 5' to 3' polarity. Activity of helicase is dependent on magnesium. Functionally, enzyme possessing two different activities: an exoribonuclease activity acting on both ssRNA and dsRNA in a 3' to 5' direction and a N7-guanine methyltransferase activity. Acts as a proofreading exoribonuclease for RNA replication, thereby lowering The sensitivity of the virus to RNA mutagens. Its function is as follows. Plays a role in viral transcription/replication and prevents the simultaneous activation of host cell dsRNA sensors, such as MDA5/IFIH1, OAS, and PKR. Acts by degrading the 5'-polyuridines generated during replication of the poly(A) region of viral genomic and subgenomic RNAs. Catalyzes a two-step reaction in which a 2'3'-cyclic phosphate (2'3'-cP) is first generated by 2'-O transesterification, which is then hydrolyzed to a 3'-phosphate (3'-P). If not degraded, poly(U) RNA would hybridize with poly(A) RNA tails and activate host dsRNA sensors. Methyltransferase that mediates mRNA cap 2'-O-ribose methylation to the 5'-cap structure of viral mRNAs. N7-methyl guanosine cap is a prerequisite for binding of nsp16. Therefore plays an essential role in viral mRNAs cap methylation which is essential to evade immune system. The polypeptide is Replicase polyprotein 1ab (rep) (Gallus gallus (Chicken)).